The sequence spans 318 residues: tRNA pseudouridine synthase B (318 aa).

D54 serves as the catalytic Nucleophile.

This sequence belongs to the pseudouridine synthase TruB family. Type 1 subfamily.

The enzyme catalyses uridine(55) in tRNA = pseudouridine(55) in tRNA. Its function is as follows. Responsible for synthesis of pseudouridine from uracil-55 in the psi GC loop of transfer RNAs. The protein is tRNA pseudouridine synthase B of Ralstonia pickettii (strain 12J).